Consider the following 345-residue polypeptide: NADH-ubiquinone oxidoreductase chain 2 (345 aa).

9 helical membrane passes run 25 to 45, 60 to 80, 99 to 119, 149 to 171, 178 to 198, 199 to 219, 242 to 262, 282 to 302, and 324 to 344; these read HWLL…PLMT, FLTQ…NAWL, TIAI…PEVL, LNTP…GGLN, ILAF…PFSP, QLMI…FLVL, ALSL…GFVP, LALS…IVTL, and LLLS…PLTL.

This sequence belongs to the complex I subunit 2 family. Core subunit of respiratory chain NADH dehydrogenase (Complex I) which is composed of 45 different subunits.

Its subcellular location is the mitochondrion inner membrane. The enzyme catalyses a ubiquinone + NADH + 5 H(+)(in) = a ubiquinol + NAD(+) + 4 H(+)(out). Functionally, core subunit of the mitochondrial membrane respiratory chain NADH dehydrogenase (Complex I) which catalyzes electron transfer from NADH through the respiratory chain, using ubiquinone as an electron acceptor. Essential for the catalytic activity and assembly of complex I. The sequence is that of NADH-ubiquinone oxidoreductase chain 2 (mt-nd2) from Xenopus laevis (African clawed frog).